Consider the following 275-residue polypeptide: Nitrogenase iron protein 3 (275 aa).

Gly-9–Ser-16 lines the ATP pocket. A [4Fe-4S] cluster-binding site is contributed by Cys-97. An ADP-ribosylarginine; by dinitrogenase reductase ADP-ribosyltransferase modification is found at Arg-100. Cys-132 provides a ligand contact to [4Fe-4S] cluster.

It belongs to the NifH/BchL/ChlL family. As to quaternary structure, homodimer. [4Fe-4S] cluster serves as cofactor. In terms of processing, the reversible ADP-ribosylation of Arg-100 inactivates the nitrogenase reductase and regulates nitrogenase activity.

The catalysed reaction is N2 + 8 reduced [2Fe-2S]-[ferredoxin] + 16 ATP + 16 H2O = H2 + 8 oxidized [2Fe-2S]-[ferredoxin] + 2 NH4(+) + 16 ADP + 16 phosphate + 6 H(+). The key enzymatic reactions in nitrogen fixation are catalyzed by the nitrogenase complex, which has 2 components: the iron protein and the molybdenum-iron protein. The sequence is that of Nitrogenase iron protein 3 (nifH3) from Clostridium pasteurianum.